Consider the following 567-residue polypeptide: Serine/threonine-protein kinase SSN3 (567 aa).

The region spanning tyrosine 68–phenylalanine 470 is the Protein kinase domain. Isoleucine 74 to valine 82 is an ATP binding site. A disordered region spans residues arginine 88 to arginine 179. Low complexity predominate over residues serine 90–serine 101. Composition is skewed to polar residues over residues leucine 102–glycine 122 and proline 133–threonine 150. Residues glycine 167–arginine 179 are compositionally biased toward basic and acidic residues. Residue lysine 190 coordinates ATP. The Proton acceptor role is filled by aspartate 293. Over residues alanine 546–serine 556 the composition is skewed to low complexity. Positions alanine 546–lysine 567 are disordered.

This sequence belongs to the protein kinase superfamily. CMGC Ser/Thr protein kinase family. CDC2/CDKX subfamily. As to quaternary structure, component of the SRB8-11 complex, a regulatory module of the Mediator complex. Mg(2+) is required as a cofactor.

The protein localises to the nucleus. The catalysed reaction is L-seryl-[protein] + ATP = O-phospho-L-seryl-[protein] + ADP + H(+). It carries out the reaction L-threonyl-[protein] + ATP = O-phospho-L-threonyl-[protein] + ADP + H(+). It catalyses the reaction [DNA-directed RNA polymerase] + ATP = phospho-[DNA-directed RNA polymerase] + ADP + H(+). Functionally, component of the SRB8-11 complex. The SRB8-11 complex is a regulatory module of the Mediator complex which is itself involved in regulation of basal and activated RNA polymerase II-dependent transcription. The SRB8-11 complex may be involved in the transcriptional repression of a subset of genes regulated by Mediator. It may inhibit the association of the Mediator complex with RNA polymerase II to form the holoenzyme complex. The SRB8-11 complex phosphorylates the C-terminal domain (CTD) of the largest subunit of RNA polymerase II. In Candida glabrata (strain ATCC 2001 / BCRC 20586 / JCM 3761 / NBRC 0622 / NRRL Y-65 / CBS 138) (Yeast), this protein is Serine/threonine-protein kinase SSN3 (SSN3).